The sequence spans 362 residues: NAD(P)H-quinone oxidoreductase subunit 1, chloroplastic (362 aa).

8 helical membrane passes run 27-47 (IWILPILTLLLGITIEVLVIV), 94-114 (IPLFSIGPSIAVISILLSFLV), 128-148 (IGVFLWIAISSIAPIGLLMAG), 164-184 (AAQSISYEIPLTFCVLAISLL), 202-222 (FFGWNLWRQPIGFLVFLISSL), 247-267 (YSGIKYGLFYLVSYLNLLVSS), 303-323 (TMSIFITLTKAYLFLFISITI), and 335-355 (LLNLGWKFLLPISLGNLLLTT).

The protein belongs to the complex I subunit 1 family. NDH is composed of at least 16 different subunits, 5 of which are encoded in the nucleus.

The protein resides in the plastid. It is found in the chloroplast thylakoid membrane. It catalyses the reaction a plastoquinone + NADH + (n+1) H(+)(in) = a plastoquinol + NAD(+) + n H(+)(out). The enzyme catalyses a plastoquinone + NADPH + (n+1) H(+)(in) = a plastoquinol + NADP(+) + n H(+)(out). Its function is as follows. NDH shuttles electrons from NAD(P)H:plastoquinone, via FMN and iron-sulfur (Fe-S) centers, to quinones in the photosynthetic chain and possibly in a chloroplast respiratory chain. The immediate electron acceptor for the enzyme in this species is believed to be plastoquinone. Couples the redox reaction to proton translocation, and thus conserves the redox energy in a proton gradient. This is NAD(P)H-quinone oxidoreductase subunit 1, chloroplastic (ndhA) from Oryza sativa (Rice).